We begin with the raw amino-acid sequence, 147 residues long: Ribosome maturation factor RimP (147 aa).

Belongs to the RimP family.

It localises to the cytoplasm. Its function is as follows. Required for maturation of 30S ribosomal subunits. The polypeptide is Ribosome maturation factor RimP (Sulfurihydrogenibium sp. (strain YO3AOP1)).